We begin with the raw amino-acid sequence, 373 residues long: Pectin lyase D (373 aa).

Residues 1 to 19 (MKYAAALTAIAALAARAAA) form the signal peptide. 2 disulfides stabilise this stretch: Cys-82–Cys-101 and Cys-91–Cys-225. The N-linked (GlcNAc...) asparagine glycan is linked to Asn-128. Residue Arg-255 is part of the active site. Residue Asn-274 is glycosylated (N-linked (GlcNAc...) asparagine). Cys-321 and Cys-329 form a disulfide bridge. The N-linked (GlcNAc...) asparagine glycan is linked to Asn-348. The span at 354–366 (LPSADAASTSPAS) shows a compositional bias: low complexity. Positions 354-373 (LPSADAASTSPASNAGQGNL) are disordered.

This sequence belongs to the polysaccharide lyase 1 family. May be O-glycosylated; does not contain N-acetylglucosamine.

The protein resides in the secreted. The enzyme catalyses Eliminative cleavage of (1-&gt;4)-alpha-D-galacturonan methyl ester to give oligosaccharides with 4-deoxy-6-O-methyl-alpha-D-galact-4-enuronosyl groups at their non-reducing ends.. Its function is as follows. Pectinolytic enzymes consist of four classes of enzymes: pectin lyase, polygalacturonase, pectin methylesterase and rhamnogalacturonase. Among pectinolytic enzymes, pectin lyase is the most important in depolymerization of pectin, since it cleaves internal glycosidic bonds of highly methylated pectins. The sequence is that of Pectin lyase D (pelD) from Aspergillus niger.